A 91-amino-acid chain; its full sequence is MVKIRLARFGSKHNPHYPHYRIVVTDARRKRDGKYIEKIGYYDPRKTTPDWLKVDVERARYWLSVGAQPTDTARRLLRQAGVFRQEAREGA.

Belongs to the bacterial ribosomal protein bS16 family. In terms of assembly, part of the 30S ribosomal subunit.

In terms of biological role, binds to the lower part of the body of the 30S subunit, where it stabilizes two of its domains. The polypeptide is Small ribosomal subunit protein bS16 (Thermus thermophilus).